The primary structure comprises 220 residues: Charged multivesicular body protein 3 (220 aa).

A lipid anchor (N-myristoyl glycine) is attached at G2. Residues K22 to K54 are a coiled coil. The important for autoinhibitory function stretch occupies residues I168–L169. The interval A196–S220 is disordered. A coiled-coil region spans residues M197–S220. Positions S200–E209 are enriched in acidic residues. Residues D201–E209 carry the MIT-interacting motif motif. Interaction with STAMBP stretches follow at residues E203–D207 and R219–S220.

Belongs to the SNF7 family. As to quaternary structure, probable core component of the endosomal sorting required for transport complex III (ESCRT-III). ESCRT-III components are thought to multimerize to form a flat lattice on the perimeter membrane of the endosome. Several assembly forms of ESCRT-III may exist that interact and act sequentially.

The protein resides in the cytoplasm. Its subcellular location is the cytosol. The protein localises to the membrane. It is found in the endosome. It localises to the late endosome membrane. Probable core component of the endosomal sorting required for transport complex III (ESCRT-III) which is involved in multivesicular bodies (MVBs) formation and sorting of endosomal cargo proteins into MVBs. MVBs contain intraluminal vesicles (ILVs) that are generated by invagination and scission from the limiting membrane of the endosome and mostly are delivered to lysosomes enabling degradation of membrane proteins, such as stimulated growth factor receptors, lysosomal enzymes and lipids. Involved in late stages of cytokinesis. Plays a role in endosomal sorting/trafficking of EGF receptor. The sequence is that of Charged multivesicular body protein 3 (chmp3) from Xenopus tropicalis (Western clawed frog).